The sequence spans 121 residues: Protein PilH (121 aa).

The region spanning 3 to 119 is the Response regulatory domain; sequence RILIVDDSPT…TLLKTINAVL (117 aa). Asp52 carries the post-translational modification 4-aspartylphosphate.

Functionally, may be a part of a signal-transduction system that regulates twitching motility by controlling pilus function (extension and retraction). This Pseudomonas aeruginosa (strain ATCC 15692 / DSM 22644 / CIP 104116 / JCM 14847 / LMG 12228 / 1C / PRS 101 / PAO1) protein is Protein PilH (pilH).